Reading from the N-terminus, the 149-residue chain is Large ribosomal subunit protein uL16c (149 aa).

The protein belongs to the universal ribosomal protein uL16 family. As to quaternary structure, part of the 50S ribosomal subunit.

It is found in the plastid. The protein resides in the organellar chromatophore. This chain is Large ribosomal subunit protein uL16c (rpl16), found in Paulinella chromatophora.